Consider the following 722-residue polypeptide: Peroxisomal bifunctional enzyme (722 aa).

An enoyl-CoA hydratase / isomerase region spans residues 1–281; the sequence is MAEYLRLPHS…FAEKSANKWS (281 aa). Ala2 bears the Blocked amino end (Ala) mark. Position 38 is an N6-succinyllysine (Lys38). Gly100 contacts substrate. Lys173 carries the N6-acetyllysine; alternate modification. Lys173 carries the post-translational modification N6-succinyllysine; alternate. Lys182 is subject to N6-succinyllysine. Lys190 and Lys218 each carry N6-acetyllysine; alternate. N6-succinyllysine; alternate occurs at positions 190 and 218. Lys241 is modified (N6-succinyllysine). Lys249 is modified (N6-acetyllysine). Residue Lys253 is modified to N6-succinyllysine. N6-acetyllysine; alternate is present on Lys275. An N6-succinyllysine; alternate modification is found at Lys275. Residues Lys279, Lys289, and Lys330 each carry the N6-succinyllysine modification. The interval 282-571 is 3-hydroxyacyl-CoA dehydrogenase; it reads TPSGASWKTA…DMLCEAGRFG (290 aa). 3 positions are modified to N6-acetyllysine: Lys345, Lys359, and Lys463. Lys531 bears the N6-succinyllysine mark. Thr547 is subject to Phosphothreonine. N6-succinyllysine is present on Lys576. An N6-acetyllysine; alternate mark is found at Lys583, Lys590, and Lys709. An N6-succinyllysine; alternate mark is found at Lys583, Lys590, and Lys709. Positions 720 to 722 match the Microbody targeting signal motif; it reads SKL. Lys721 carries the N6-succinyllysine modification.

The protein in the N-terminal section; belongs to the enoyl-CoA hydratase/isomerase family. This sequence in the C-terminal section; belongs to the 3-hydroxyacyl-CoA dehydrogenase family. As to quaternary structure, monomer. Acetylated, leading to enhanced enzyme activity. Acetylation is enhanced by up to 80% after treatment either with trichostin A (TCA) or with nicotinamide (NAM) with highest increase on Lys-345. Acetylation and enzyme activity increased by about 1.5% on addition of fatty acids.

The protein resides in the peroxisome. It carries out the reaction a (3S)-3-hydroxyacyl-CoA = a (2E)-enoyl-CoA + H2O. The catalysed reaction is a 4-saturated-(3S)-3-hydroxyacyl-CoA = a (3E)-enoyl-CoA + H2O. The enzyme catalyses a (3Z)-enoyl-CoA = a 4-saturated (2E)-enoyl-CoA. It catalyses the reaction a (3E)-enoyl-CoA = a 4-saturated (2E)-enoyl-CoA. It carries out the reaction a (3S)-3-hydroxyacyl-CoA + NAD(+) = a 3-oxoacyl-CoA + NADH + H(+). The catalysed reaction is (2S,3S)-3-hydroxy-2-methylbutanoyl-CoA = (2E)-2-methylbut-2-enoyl-CoA + H2O. The enzyme catalyses (3E,5Z)-tetradecadienoyl-CoA = (2E,5Z)-tetradecadienoyl-CoA. It catalyses the reaction (3E,5Z)-octadienoyl-CoA = (2E,5Z)-octadienoyl-CoA. It carries out the reaction (3S)-hydroxydecanoyl-CoA + NAD(+) = 3-oxodecanoyl-CoA + NADH + H(+). The catalysed reaction is (3E)-decenoyl-CoA = (2E)-decenoyl-CoA. The enzyme catalyses (3Z)-hexenoyl-CoA = (2E)-hexenoyl-CoA. It catalyses the reaction (3E)-hexenoyl-CoA = (2E)-hexenoyl-CoA. It carries out the reaction (3S)-hydroxydecanoyl-CoA = (2E)-decenoyl-CoA + H2O. The catalysed reaction is (3S)-hydroxyhexanoyl-CoA = (2E)-hexenoyl-CoA + H2O. The enzyme catalyses (3S)-hydroxyhexadecanoyl-CoA + NAD(+) = 3-oxohexadecanoyl-CoA + NADH + H(+). It catalyses the reaction (3S)-hydroxyhexadecanoyl-CoA = (2E)-hexadecenoyl-CoA + H2O. It carries out the reaction (2E)-hexadecenedioyl-CoA + H2O = (3S)-hydroxyhexadecanedioyl-CoA. The catalysed reaction is (3S)-hydroxyhexadecanedioyl-CoA + NAD(+) = 3-oxohexadecanedioyl-CoA + NADH + H(+). It participates in lipid metabolism; fatty acid beta-oxidation. Its activity is regulated as follows. Enzyme activity enhanced by acetylation. In terms of biological role, peroxisomal trifunctional enzyme possessing 2-enoyl-CoA hydratase, 3-hydroxyacyl-CoA dehydrogenase, and delta 3, delta 2-enoyl-CoA isomerase activities. Catalyzes two of the four reactions of the long chain fatty acids peroxisomal beta-oxidation pathway. Can also use branched-chain fatty acids such as 2-methyl-2E-butenoyl-CoA as a substrate, which is hydrated into (2S,3S)-3-hydroxy-2-methylbutanoyl-CoA. Optimal isomerase for 2,5 double bonds into 3,5 form isomerization in a range of enoyl-CoA species. Also able to isomerize both 3-cis and 3-trans double bonds into the 2-trans form in a range of enoyl-CoA species. Regulates the amount of medium-chain dicarboxylic fatty acids which are essential regulators of all fatty acid oxidation pathways. Also involved in the degradation of long-chain dicarboxylic acids through peroxisomal beta-oxidation. The chain is Peroxisomal bifunctional enzyme from Rattus norvegicus (Rat).